Here is a 108-residue protein sequence, read N- to C-terminus: Mitochondrial pyruvate carrier 3 (108 aa).

3 helical membrane-spanning segments follow: residues 19 to 35, 51 to 67, and 74 to 90; these read IHFWAPTFKWGISIANI, IVITGTGLVWSRYSTVI, and LFSVSLGMAVTGIYQLT.

Belongs to the mitochondrial pyruvate carrier (MPC) (TC 2.A.105) family. Abundant in leaf and particularly in the guard cells.

The protein resides in the mitochondrion. It is found in the mitochondrion inner membrane. Mediates the uptake of pyruvate into mitochondria. Negatively regulates ABA-induced guard cell signaling and mediates drought stress responses. The polypeptide is Mitochondrial pyruvate carrier 3 (Arabidopsis thaliana (Mouse-ear cress)).